Here is an 86-residue protein sequence, read N- to C-terminus: MSKICQITGKKAMIGNNVSHSKRRTKRTFDLNLFNKKFYYVEQDCWISLSLCANGLRIINKKGLDAALNDAVAKGFCDWKSIKVIG.

This sequence belongs to the bacterial ribosomal protein bL28 family.

The polypeptide is Large ribosomal subunit protein bL28 (Bacteroides thetaiotaomicron (strain ATCC 29148 / DSM 2079 / JCM 5827 / CCUG 10774 / NCTC 10582 / VPI-5482 / E50)).